The sequence spans 324 residues: tRNA dimethylallyltransferase (324 aa).

18–25 is an ATP binding site; it reads GPTAVGKT. 20-25 lines the substrate pocket; the sequence is TAVGKT. An interaction with substrate tRNA region spans residues 43-46; that stretch reads DSRQ.

It belongs to the IPP transferase family. Monomer. Requires Mg(2+) as cofactor.

It carries out the reaction adenosine(37) in tRNA + dimethylallyl diphosphate = N(6)-dimethylallyladenosine(37) in tRNA + diphosphate. Functionally, catalyzes the transfer of a dimethylallyl group onto the adenine at position 37 in tRNAs that read codons beginning with uridine, leading to the formation of N6-(dimethylallyl)adenosine (i(6)A). The polypeptide is tRNA dimethylallyltransferase (Salinibacter ruber (strain DSM 13855 / M31)).